The following is a 232-amino-acid chain: 7-cyano-7-deazaguanine synthase (232 aa).

Position 8-18 (8-18 (FSGGQDSTTCL)) interacts with ATP. The Zn(2+) site is built by C189, C198, C201, and C204.

This sequence belongs to the QueC family. Requires Zn(2+) as cofactor.

It catalyses the reaction 7-carboxy-7-deazaguanine + NH4(+) + ATP = 7-cyano-7-deazaguanine + ADP + phosphate + H2O + H(+). It participates in purine metabolism; 7-cyano-7-deazaguanine biosynthesis. Its function is as follows. Catalyzes the ATP-dependent conversion of 7-carboxy-7-deazaguanine (CDG) to 7-cyano-7-deazaguanine (preQ(0)). This Yersinia enterocolitica serotype O:8 / biotype 1B (strain NCTC 13174 / 8081) protein is 7-cyano-7-deazaguanine synthase.